Here is a 338-residue protein sequence, read N- to C-terminus: Fructose-1,6-bisphosphatase class 1 (338 aa).

4 residues coordinate Mg(2+): Glu-92, Asp-114, Leu-116, and Asp-117. Substrate-binding positions include 117 to 120 (DGSS), Asn-210, Tyr-243, and Lys-276. Glu-282 is a binding site for Mg(2+).

Belongs to the FBPase class 1 family. As to quaternary structure, homotetramer. Mg(2+) serves as cofactor.

The protein resides in the cytoplasm. It catalyses the reaction beta-D-fructose 1,6-bisphosphate + H2O = beta-D-fructose 6-phosphate + phosphate. The protein operates within carbohydrate biosynthesis; gluconeogenesis. The protein is Fructose-1,6-bisphosphatase class 1 of Maridesulfovibrio salexigens (strain ATCC 14822 / DSM 2638 / NCIMB 8403 / VKM B-1763) (Desulfovibrio salexigens).